Here is a 427-residue protein sequence, read N- to C-terminus: Phosphomethylpyrimidine synthase (427 aa).

Substrate contacts are provided by residues Asn-66, Met-95, Tyr-124, His-163, 185–187 (SRG), 226–229 (DGLR), and Glu-265. His-269 lines the Zn(2+) pocket. A substrate-binding site is contributed by Tyr-292. His-333 contributes to the Zn(2+) binding site. Residues Cys-409, Cys-412, and Cys-416 each coordinate [4Fe-4S] cluster.

Belongs to the ThiC family. As to quaternary structure, homodimer. [4Fe-4S] cluster serves as cofactor.

The enzyme catalyses 5-amino-1-(5-phospho-beta-D-ribosyl)imidazole + S-adenosyl-L-methionine = 4-amino-2-methyl-5-(phosphooxymethyl)pyrimidine + CO + 5'-deoxyadenosine + formate + L-methionine + 3 H(+). Its pathway is cofactor biosynthesis; thiamine diphosphate biosynthesis. Its function is as follows. Catalyzes the synthesis of the hydroxymethylpyrimidine phosphate (HMP-P) moiety of thiamine from aminoimidazole ribotide (AIR) in a radical S-adenosyl-L-methionine (SAM)-dependent reaction. The chain is Phosphomethylpyrimidine synthase from Syntrophus aciditrophicus (strain SB).